Reading from the N-terminus, the 183-residue chain is Putative 3-methyladenine DNA glycosylase (183 aa).

It belongs to the DNA glycosylase MPG family.

The sequence is that of Putative 3-methyladenine DNA glycosylase from Legionella pneumophila (strain Lens).